The following is a 387-amino-acid chain: NifS-like protein (387 aa).

Residues 58–59 (SE) and 184–186 (SIN) each bind pyridoxal 5'-phosphate.

It belongs to the class-V pyridoxal-phosphate-dependent aminotransferase family. NifS/IscS subfamily. The cofactor is pyridoxal 5'-phosphate.

It is found in the virion. This is NifS-like protein from African swine fever virus (isolate Tick/South Africa/Pretoriuskop Pr4/1996) (ASFV).